The chain runs to 273 residues: 2-dehydro-3-deoxyphosphooctonate aldolase (273 aa).

The protein belongs to the KdsA family.

Its subcellular location is the cytoplasm. It catalyses the reaction D-arabinose 5-phosphate + phosphoenolpyruvate + H2O = 3-deoxy-alpha-D-manno-2-octulosonate-8-phosphate + phosphate. The protein operates within carbohydrate biosynthesis; 3-deoxy-D-manno-octulosonate biosynthesis; 3-deoxy-D-manno-octulosonate from D-ribulose 5-phosphate: step 2/3. It functions in the pathway bacterial outer membrane biogenesis; lipopolysaccharide biosynthesis. This chain is 2-dehydro-3-deoxyphosphooctonate aldolase, found in Nitratidesulfovibrio vulgaris (strain ATCC 29579 / DSM 644 / CCUG 34227 / NCIMB 8303 / VKM B-1760 / Hildenborough) (Desulfovibrio vulgaris).